A 201-amino-acid polypeptide reads, in one-letter code: 3-isopropylmalate dehydratase small subunit (201 aa).

The protein belongs to the LeuD family. LeuD type 1 subfamily. Heterodimer of LeuC and LeuD.

The catalysed reaction is (2R,3S)-3-isopropylmalate = (2S)-2-isopropylmalate. It participates in amino-acid biosynthesis; L-leucine biosynthesis; L-leucine from 3-methyl-2-oxobutanoate: step 2/4. Its function is as follows. Catalyzes the isomerization between 2-isopropylmalate and 3-isopropylmalate, via the formation of 2-isopropylmaleate. The protein is 3-isopropylmalate dehydratase small subunit of Salmonella arizonae (strain ATCC BAA-731 / CDC346-86 / RSK2980).